A 589-amino-acid chain; its full sequence is ATP-dependent ubiquitin transferase-like protein Cap2 (589 aa).

Residue C13 forms a Glycyl cysteine dithioester (Cys-Gly) (interchain with G-Cter in DncV) linkage. A Glycyl lysine isopeptide (Lys-Gly) (interchain with G-Cter in DncV) cross-link involves residue K77. C91 (for E2-like domain) is an active-site residue. Residues K305, K387, and K484 each participate in a glycyl lysine isopeptide (Lys-Gly) (interchain with G-Cter in DncV) cross-link. C493 participates in a covalent cross-link: Glycyl cysteine dithioester (Cys-Gly) (interchain with G-Cter in DncV). Residues C493, C496, and C513 each act as for E1-like domain in the active site. C513 participates in a covalent cross-link: Glycyl cysteine dithioester (Cys-Gly) (interchain with G-Cter in DncV). K523 participates in a covalent cross-link: Glycyl lysine isopeptide (Lys-Gly) (interchain with G-Cter in DncV).

It in the C-terminal section; belongs to the HesA/MoeB/ThiF family. A Cap2 dimer is bound on either side by a DncV monomer. Conjugated to DncV via 5 different Lys residues and 3 Cys residues.

Functionally, CD-NTase priming component of a CBASS antiviral system. CBASS (cyclic oligonucleotide-based antiphage signaling system) provides immunity against bacteriophages. The CD-NTase protein (DncV) synthesizes cyclic nucleotides in response to infection; these serve as specific second messenger signals. The signals activate a diverse range of effectors, leading to bacterial cell death and thus abortive phage infection. A type II-A(GA) CBASS system. Conjugates DncV to itself in vitro and to other cellular proteins in vivo; conjugation requires ATP. This primes DncV, upon phage infection CdnA activates and makes cyclic nucleotides. In terms of biological role, protects E.coli against phage infection. When capV and dncV are introduced in E.coli MG1655 there is 1000-fold protection against phage P1; protection against other phage (T2, T4, T5, T6 and lambda-vir) requires the 2 subsequent genes. In another paper the capV-dncV-cap2-cap3 operon gives 10(4)-10(5)-fold protection against phages lambda, T2, T4 and T6, about 1000-fold protection against P1 and 10-fold protection against T5. The polypeptide is ATP-dependent ubiquitin transferase-like protein Cap2 (Escherichia coli (strain TW11681)).